A 240-amino-acid chain; its full sequence is Ribosomal RNA small subunit methyltransferase G (240 aa).

S-adenosyl-L-methionine-binding positions include G80, F85, 103-105 (DSS), 131-132 (AE), and R150.

It belongs to the methyltransferase superfamily. RNA methyltransferase RsmG family.

It is found in the cytoplasm. Its function is as follows. Specifically methylates the N7 position of a guanine in 16S rRNA. This Thermoanaerobacter sp. (strain X514) protein is Ribosomal RNA small subunit methyltransferase G.